Consider the following 87-residue polypeptide: Small ribosomal subunit protein bS20 (87 aa).

The span at Met-1–Ala-11 shows a compositional bias: basic residues. A disordered region spans residues Met-1–Met-27.

The protein belongs to the bacterial ribosomal protein bS20 family.

In terms of biological role, binds directly to 16S ribosomal RNA. This Actinobacillus succinogenes (strain ATCC 55618 / DSM 22257 / CCUG 43843 / 130Z) protein is Small ribosomal subunit protein bS20.